Here is a 1225-residue protein sequence, read N- to C-terminus: Chromosome-associated kinesin KIF4 (1225 aa).

In terms of domain architecture, Kinesin motor spans 9-338; the sequence is IPVRVVRCRP…LRYADRARKI (330 aa). 88-95 is an ATP binding site; it reads GQTGSGKT. A coiled-coil region spans residues 352 to 1003; it reads ELNHLKQQVQ…LKQKMLLVQV (652 aa). Disordered stretches follow at residues 498 to 520, 717 to 744, and 1006 to 1047; these read QDAA…FTTQ, NKRL…GMEG, and GQKL…PTPE. Residues 507–520 are compositionally biased toward polar residues; that stretch reads GQVTKRSSDDFTTQ. Over residues 719 to 738 the composition is skewed to basic and acidic residues; that stretch reads RLKDALQKQREAADKRKESQ. Residues 1004-1225 form a globular region; that stretch reads ASGQKLRRDQ…GCTPIKEEID (222 aa).

It belongs to the TRAFAC class myosin-kinesin ATPase superfamily. Kinesin family. Chromokinesin subfamily. [2Fe-2S] cluster is required as a cofactor. It depends on [4Fe-4S] cluster as a cofactor. In terms of tissue distribution, expressed in proliferating cells; neuroepithelium of embryos.

It is found in the nucleus. It localises to the chromosome. The protein resides in the cytoplasm. The protein localises to the cytoskeleton. In terms of biological role, iron-sulfur (Fe-S) cluster binding motor protein that has a role in chromosome segregation during mitosis. Required for mitotic chromosomal positioning and bipolar spindle stabilization. The protein is Chromosome-associated kinesin KIF4 (KIF4) of Gallus gallus (Chicken).